The sequence spans 162 residues: Caveolin-2 (162 aa).

Residues 1 to 86 (MGLETEKADV…FEISKYVLYK (86 aa)) are Cytoplasmic-facing. Tyr-19 bears the Phosphotyrosine; by SRC mark. Ser-20 and Ser-23 each carry phosphoserine. At Tyr-27 the chain carries Phosphotyrosine; by SRC. A Phosphoserine modification is found at Ser-36. An intramembrane region (helical) is located at residues 87–107 (FLTVFLAIPLAFVAGILFATL). At 108 to 162 (SCLHIWIIMPFVKTCLMVLPSVQTIWKSVTDVIIAPLCTSVGRSFSSISLRLSQD) the chain is on the cytoplasmic side.

The protein belongs to the caveolin family. Monomer or homodimer. Interacts with CAV1; the interaction forms a stable heterooligomeric complex that is required for targeting to lipid rafts and for caveolae formation. Tyrosine phosphorylated forms do not form heterooligomers with the Tyr-19-phosphorylated form existing as a monomer or dimer, and the Tyr-27-form as a monomer only. Interacts (tyrosine phosphorylated form) with the SH2 domain-containing proteins, RASA1, NCK1 and SRC. Interacts (tyrosine phosphorylated form) with INSR, the interaction (Tyr-27-phosphorylated form) is increased on insulin stimulation. Interacts (Tyr-19 phosphorylated form) with MAPK1 (phosphorylated form); the interaction, promoted by insulin, leads to nuclear location and MAPK1 activation. Interacts with STAT3; the interaction is increased on insulin-induced tyrosine phosphorylation leading to STAT activation. In terms of processing, phosphorylated on serine and tyrosine residues. CAV1 promotes phosphorylation on Ser-23 which then targets the complex to the plasma membrane, lipid rafts and caveolae. Phosphorylation on Ser-36 appears to modulate mitosis in endothelial cells. Phosphorylation on both Tyr-19 and Tyr-27 is required for insulin-induced 'Ser-727' phosphorylation of STAT3 and its activation. Phosphorylation on Tyr-19 is required for insulin-induced phosphorylation of MAPK1 and DNA binding of STAT3. Tyrosine phosphorylation is induced by both EGF and insulin (By. similarity).

It is found in the nucleus. It localises to the cytoplasm. The protein resides in the golgi apparatus membrane. The protein localises to the cell membrane. Its subcellular location is the membrane. It is found in the caveola. Functionally, may act as a scaffolding protein within caveolar membranes. Interacts directly with G-protein alpha subunits and can functionally regulate their activity. Acts as an accessory protein in conjunction with CAV1 in targeting to lipid rafts and driving caveolae formation. The Ser-36 phosphorylated form has a role in modulating mitosis in endothelial cells. Positive regulator of cellular mitogenesis of the MAPK signaling pathway. Required for the insulin-stimulated nuclear translocation and activation of MAPK1 and STAT3, and the subsequent regulation of cell cycle progression. The sequence is that of Caveolin-2 (CAV2) from Otolemur garnettii (Small-eared galago).